A 66-amino-acid polypeptide reads, in one-letter code: Large ribosomal subunit protein uL29 (66 aa).

The protein belongs to the universal ribosomal protein uL29 family.

The protein is Large ribosomal subunit protein uL29 of Bacillus licheniformis (strain ATCC 14580 / DSM 13 / JCM 2505 / CCUG 7422 / NBRC 12200 / NCIMB 9375 / NCTC 10341 / NRRL NRS-1264 / Gibson 46).